The chain runs to 373 residues: Glutamate 5-kinase (373 aa).

Lys-12 provides a ligand contact to ATP. 3 residues coordinate substrate: Ser-52, Asp-139, and Asn-154. Residue 216–222 coordinates ATP; the sequence is TGGMVTK. Positions 281–359 constitute a PUA domain; it reads RGSICVDDGA…QELNAVLGGN (79 aa).

It belongs to the glutamate 5-kinase family.

The protein resides in the cytoplasm. The catalysed reaction is L-glutamate + ATP = L-glutamyl 5-phosphate + ADP. It functions in the pathway amino-acid biosynthesis; L-proline biosynthesis; L-glutamate 5-semialdehyde from L-glutamate: step 1/2. In terms of biological role, catalyzes the transfer of a phosphate group to glutamate to form L-glutamate 5-phosphate. The sequence is that of Glutamate 5-kinase from Dehalococcoides mccartyi (strain CBDB1).